Reading from the N-terminus, the 289-residue chain is Eukaryotic translation initiation factor 3 subunit G (289 aa).

2 disordered regions span residues 1–31 (MSRLANSAGDWADDEEFDEAASLPPQQVISN) and 151–199 (DTMA…GEKM). The RRM domain maps to 209-287 (ATLRVTNVSE…LILRVEFAKK (79 aa)).

It belongs to the eIF-3 subunit G family. As to quaternary structure, component of the eukaryotic translation initiation factor 3 (eIF-3) complex.

The protein localises to the cytoplasm. Functionally, RNA-binding component of the eukaryotic translation initiation factor 3 (eIF-3) complex, which is involved in protein synthesis of a specialized repertoire of mRNAs and, together with other initiation factors, stimulates binding of mRNA and methionyl-tRNAi to the 40S ribosome. The eIF-3 complex specifically targets and initiates translation of a subset of mRNAs involved in cell proliferation. This subunit can bind 18S rRNA. This chain is Eukaryotic translation initiation factor 3 subunit G, found in Coccidioides immitis (strain RS) (Valley fever fungus).